Here is a 301-residue protein sequence, read N- to C-terminus: 2-methylisocitrate lyase (301 aa).

Residue 53–55 coordinates substrate; that stretch reads SGA. Asp92 and Asp94 together coordinate Mg(2+). Substrate is bound by residues 129-130, Arg162, Glu192, 214-216, Arg245, and Arg274; these read CG and NMT.

Belongs to the isocitrate lyase/PEP mutase superfamily. Methylisocitrate lyase family. Requires Mg(2+) as cofactor.

The catalysed reaction is 3-hydroxybutane-1,2,3-tricarboxylate = pyruvate + succinate. Functionally, involved in the methylcitric acid cycle. Catalyzes the cleavage of 2-methylisocitrate to yield pyruvate and succinate. The sequence is that of 2-methylisocitrate lyase from Bacillus subtilis (strain 168).